A 166-amino-acid polypeptide reads, in one-letter code: MFPMVTEFMNYGQQTVRAARYIGQGFMITLSHANRLPVTIQYPYEKLITSERFRGRIHFEFDKCIACEVCVRVCPIDLPVVDWKLETDIRKKRLLNYSIDFGVCIFCGNCVEYCPTNCLSMTEEYELSTYDRHELNYNQIALGRLPMSIIDDYTIRTILNLPEIKT.

4Fe-4S ferredoxin-type domains are found at residues 55–84 and 95–124; these read GRIH…VDWK and LNYS…MTEE. C64, C67, C70, C74, C104, C107, C110, and C114 together coordinate [4Fe-4S] cluster.

This sequence belongs to the complex I 23 kDa subunit family. In terms of assembly, NDH is composed of at least 16 different subunits, 5 of which are encoded in the nucleus. [4Fe-4S] cluster is required as a cofactor.

The protein localises to the plastid. The protein resides in the chloroplast thylakoid membrane. It catalyses the reaction a plastoquinone + NADH + (n+1) H(+)(in) = a plastoquinol + NAD(+) + n H(+)(out). The enzyme catalyses a plastoquinone + NADPH + (n+1) H(+)(in) = a plastoquinol + NADP(+) + n H(+)(out). Functionally, NDH shuttles electrons from NAD(P)H:plastoquinone, via FMN and iron-sulfur (Fe-S) centers, to quinones in the photosynthetic chain and possibly in a chloroplast respiratory chain. The immediate electron acceptor for the enzyme in this species is believed to be plastoquinone. Couples the redox reaction to proton translocation, and thus conserves the redox energy in a proton gradient. The chain is NAD(P)H-quinone oxidoreductase subunit I, chloroplastic from Enydra sessilis (Smallray swampwort).